The following is a 904-amino-acid chain: Exo-beta-D-glucosaminidase (904 aa).

Positions 1–32 (MFHRPASVRRFVTTAVALGLLSTLSTGARAGA) are cleaved as a signal peptide. The tract at residues 28–49 (ARAGARTHEPPPRPTTVSSTAG) is disordered. Residue Asp-476 is the Proton donor of the active site. Residue Glu-545 is the Nucleophile of the active site. Residues 813–828 (STTAGTDGASTTTVTV) show a composition bias toward low complexity. The disordered stretch occupies residues 813-833 (STTAGTDGASTTTVTVRNTGS).

This sequence belongs to the glycosyl hydrolase 2 family. In terms of assembly, monomer.

Its subcellular location is the secreted. It catalyses the reaction Hydrolysis of chitosan or chitosan oligosaccharides to remove successive D-glucosamine residues from the non-reducing termini.. Its function is as follows. Hydrolyzes chitosan and chitooligosaccharides with retention of anomeric configuration. Has no beta-mannosidase activity. The protein is Exo-beta-D-glucosaminidase of Streptomyces avermitilis (strain ATCC 31267 / DSM 46492 / JCM 5070 / NBRC 14893 / NCIMB 12804 / NRRL 8165 / MA-4680).